A 159-amino-acid polypeptide reads, in one-letter code: Protransforming growth factor alpha (159 aa).

A signal peptide spans 1–23 (MVPAAGQLALLALGILVAVCQAL). The propeptide at 24–38 (ENSTSPLSDSPVAAA) is removed in mature form. Over 24–97 (ENSTSPLSDS…AVVAASQKKQ (74 aa)) the chain is Extracellular. N-linked (GlcNAc...) asparagine glycosylation is present at N25. Positions 42–82 (HFNKCPDSHTQYCFHGTCRFLVQEEKPACVCHSGYVGVRCE) constitute an EGF-like domain. 3 disulfide bridges follow: C46-C59, C54-C70, and C72-C81. Residues 89 to 159 (VVAASQKKQA…TACCHSETVV (71 aa)) constitute a propeptide, removed in mature form. The chain crosses the membrane as a helical span at residues 98–123 (AITALVVVSIVALAVLIITCVLIHCC). The Cytoplasmic segment spans residues 124–159 (QVRKHCEWCRALVCRHEKPSALLKGRTACCHSETVV). Residues C152 and C153 are each lipidated (S-palmitoyl cysteine).

As to quaternary structure, interacts with the PDZ domains of MAGI3, SDCBP and SNTA1. The interaction with SDCBP, is required for the targeting to the cell surface. In the endoplasmic reticulum, in its immature form (i.e. with a prosegment and lacking full N-glycosylation), interacts with CNIH. In the Golgi apparatus, may form a complex with CNIH and GORASP2. Interacts (via cytoplasmic C-terminal domain) with NKD2.

The protein localises to the secreted. It is found in the extracellular space. It localises to the cell membrane. Functionally, TGF alpha is a mitogenic polypeptide that is able to bind to the EGF receptor/EGFR and to act synergistically with TGF beta to promote anchorage-independent cell proliferation in soft agar. In Rattus norvegicus (Rat), this protein is Protransforming growth factor alpha (Tgfa).